Consider the following 282-residue polypeptide: 4-hydroxy-3-methylbut-2-enyl diphosphate reductase (282 aa).

A [4Fe-4S] cluster-binding site is contributed by cysteine 12. 2 residues coordinate (2E)-4-hydroxy-3-methylbut-2-enyl diphosphate: histidine 40 and histidine 72. The dimethylallyl diphosphate site is built by histidine 40 and histidine 72. Isopentenyl diphosphate-binding residues include histidine 40 and histidine 72. Cysteine 94 is a binding site for [4Fe-4S] cluster. Histidine 122 is a (2E)-4-hydroxy-3-methylbut-2-enyl diphosphate binding site. Histidine 122 is a binding site for dimethylallyl diphosphate. Histidine 122 contacts isopentenyl diphosphate. Glutamate 124 (proton donor) is an active-site residue. Threonine 160 provides a ligand contact to (2E)-4-hydroxy-3-methylbut-2-enyl diphosphate. Cysteine 188 contributes to the [4Fe-4S] cluster binding site. (2E)-4-hydroxy-3-methylbut-2-enyl diphosphate is bound by residues serine 216, asparagine 218, and serine 260. Dimethylallyl diphosphate-binding residues include serine 216, asparagine 218, and serine 260. 3 residues coordinate isopentenyl diphosphate: serine 216, asparagine 218, and serine 260.

The protein belongs to the IspH family. [4Fe-4S] cluster is required as a cofactor.

It catalyses the reaction isopentenyl diphosphate + 2 oxidized [2Fe-2S]-[ferredoxin] + H2O = (2E)-4-hydroxy-3-methylbut-2-enyl diphosphate + 2 reduced [2Fe-2S]-[ferredoxin] + 2 H(+). The catalysed reaction is dimethylallyl diphosphate + 2 oxidized [2Fe-2S]-[ferredoxin] + H2O = (2E)-4-hydroxy-3-methylbut-2-enyl diphosphate + 2 reduced [2Fe-2S]-[ferredoxin] + 2 H(+). Its pathway is isoprenoid biosynthesis; dimethylallyl diphosphate biosynthesis; dimethylallyl diphosphate from (2E)-4-hydroxy-3-methylbutenyl diphosphate: step 1/1. It functions in the pathway isoprenoid biosynthesis; isopentenyl diphosphate biosynthesis via DXP pathway; isopentenyl diphosphate from 1-deoxy-D-xylulose 5-phosphate: step 6/6. Catalyzes the conversion of 1-hydroxy-2-methyl-2-(E)-butenyl 4-diphosphate (HMBPP) into a mixture of isopentenyl diphosphate (IPP) and dimethylallyl diphosphate (DMAPP). Acts in the terminal step of the DOXP/MEP pathway for isoprenoid precursor biosynthesis. This Geotalea daltonii (strain DSM 22248 / JCM 15807 / FRC-32) (Geobacter daltonii) protein is 4-hydroxy-3-methylbut-2-enyl diphosphate reductase.